Reading from the N-terminus, the 375-residue chain is Chaperone protein DnaJ (375 aa).

The J domain occupies 5–70 (DYYEVLGVER…SKRAAFDQYG (66 aa)). A CR-type zinc finger spans residues 134-212 (GTTVSIRVPT…CHGEGRVEEY (79 aa)). Residues cysteine 147, cysteine 150, cysteine 164, cysteine 167, cysteine 186, cysteine 189, cysteine 200, and cysteine 203 each coordinate Zn(2+). CXXCXGXG motif repeat units follow at residues 147–154 (CQPCDGSG), 164–171 (CPTCGGIG), 186–193 (CPRCHGQG), and 200–207 (CTSCHGEG).

The protein belongs to the DnaJ family. As to quaternary structure, homodimer. The cofactor is Zn(2+).

Its subcellular location is the cytoplasm. In terms of biological role, participates actively in the response to hyperosmotic and heat shock by preventing the aggregation of stress-denatured proteins and by disaggregating proteins, also in an autonomous, DnaK-independent fashion. Unfolded proteins bind initially to DnaJ; upon interaction with the DnaJ-bound protein, DnaK hydrolyzes its bound ATP, resulting in the formation of a stable complex. GrpE releases ADP from DnaK; ATP binding to DnaK triggers the release of the substrate protein, thus completing the reaction cycle. Several rounds of ATP-dependent interactions between DnaJ, DnaK and GrpE are required for fully efficient folding. Also involved, together with DnaK and GrpE, in the DNA replication of plasmids through activation of initiation proteins. The protein is Chaperone protein DnaJ of Pseudomonas putida (strain ATCC 47054 / DSM 6125 / CFBP 8728 / NCIMB 11950 / KT2440).